We begin with the raw amino-acid sequence, 363 residues long: Phosphoserine aminotransferase (363 aa).

L-glutamate is bound at residue Arg-42. Residues 76-77 (GR), Trp-102, Thr-156, Asp-175, and Gln-198 each bind pyridoxal 5'-phosphate. An N6-(pyridoxal phosphate)lysine modification is found at Lys-199. 240-241 (NT) serves as a coordination point for pyridoxal 5'-phosphate.

Belongs to the class-V pyridoxal-phosphate-dependent aminotransferase family. SerC subfamily. In terms of assembly, homodimer. Requires pyridoxal 5'-phosphate as cofactor.

The protein localises to the cytoplasm. The enzyme catalyses O-phospho-L-serine + 2-oxoglutarate = 3-phosphooxypyruvate + L-glutamate. It carries out the reaction 4-(phosphooxy)-L-threonine + 2-oxoglutarate = (R)-3-hydroxy-2-oxo-4-phosphooxybutanoate + L-glutamate. The protein operates within amino-acid biosynthesis; L-serine biosynthesis; L-serine from 3-phospho-D-glycerate: step 2/3. It functions in the pathway cofactor biosynthesis; pyridoxine 5'-phosphate biosynthesis; pyridoxine 5'-phosphate from D-erythrose 4-phosphate: step 3/5. Catalyzes the reversible conversion of 3-phosphohydroxypyruvate to phosphoserine and of 3-hydroxy-2-oxo-4-phosphonooxybutanoate to phosphohydroxythreonine. In Shewanella sp. (strain W3-18-1), this protein is Phosphoserine aminotransferase.